Here is a 229-residue protein sequence, read N- to C-terminus: UPF0173 metal-dependent hydrolase RD1_1994 (229 aa).

This sequence belongs to the UPF0173 family.

The polypeptide is UPF0173 metal-dependent hydrolase RD1_1994 (Roseobacter denitrificans (strain ATCC 33942 / OCh 114) (Erythrobacter sp. (strain OCh 114))).